The primary structure comprises 239 residues: Protein LIFEGUARD 2 (239 aa).

Transmembrane regions (helical) follow at residues 41 to 61, 66 to 86, 96 to 116, 121 to 141, 156 to 176, 179 to 199, and 213 to 233; these read LLVTIAVAATVVKVHSISVFF, AGFALYILLILTPLIVMCPLY, YLLLGIFTVALAFAVGLTCAF, VILESVILTAVVVISLTLYTF, FLFGAVIVLMVFSFIQILFPL, ISVMIYGCLASIIFCGYIVYD, and IWAAVSLYLDVINLFLSLLTL.

The protein belongs to the BI1 family. As to expression, expressed in seedlings, roots, leaves, inflorescences and flowers.

The protein resides in the membrane. Functionally, regulates the brassinosteroid (BR) signaling pathway that mediates cell elongation and organ morphogenesis. Its function is as follows. (Microbial infection) Facilitates the development of the powdery mildew fungus E.cruciferarum. (Microbial infection) May prevent cell death upon A.alternata f.sp. lycopersici (AAL) toxin treatment. This Arabidopsis thaliana (Mouse-ear cress) protein is Protein LIFEGUARD 2.